Here is a 737-residue protein sequence, read N- to C-terminus: Autolysin (737 aa).

The span at 1-13 (MKKESMSRIERRK) shows a compositional bias: basic and acidic residues. Disordered stretches follow at residues 1 to 28 (MKKE…KKST), 51 to 132 (AEAT…TDSS), and 335 to 360 (PSSG…SGTN). The signal sequence occupies residues 1-53 (MKKESMSRIERRKAQQRKKTPVQWKKSTTLFSSALIVSSVGTPVALLPVTAEA). The segment covering 67-117 (PTTETGLVETPTTETTPGTTEQPTTDSSTTTESTTESSKETPTTPSTEQPT) has biased composition (low complexity). Positions 118-132 (ADSTTPVESGTTDSS) are enriched in polar residues. Residues 339–352 (GNTGGGTVNPGTGG) are compositionally biased toward gly residues. A LysM 1 domain is found at 361–404 (TYYTVKSGDTLNKIAAQYGVSVANLRSWNGISGDLIFVGQKLIV). The interval 409 to 429 (SGNTGGSGSGGSNNNQSGTNT) is disordered. The span at 410-419 (GNTGGSGSGG) shows a compositional bias: gly residues. A compositionally biased stretch (low complexity) spans 420 to 429 (SNNNQSGTNT). 5 LysM domains span residues 429-472 (TYYT…KLIV), 497-540 (TYYT…KIIV), 565-608 (TYYT…KIIV), 631-674 (TSYT…TIIV), and 693-736 (KRHT…TLKV).

The protein belongs to the glycosyl hydrolase 73 family.

It is found in the secreted. In terms of biological role, hydrolyzes the cell wall of E.faecalis and M.lysodeikticus. May play an important role in cell wall growth and cell separation. The sequence is that of Autolysin from Enterococcus faecalis (strain ATCC 700802 / V583).